The sequence spans 1316 residues: DNA-directed RNA polymerase subunit beta' (1316 aa).

Zn(2+) is bound by residues Cys60, Cys62, Cys75, and Cys78. Positions 183-209 are disordered; the sequence is ELEEEGAKSDVRRKVRDGGEREMRQLR. Mg(2+) is bound by residues Asp535, Asp537, and Asp539. Residues Cys890, Cys966, Cys973, and Cys976 each contribute to the Zn(2+) site.

The protein belongs to the RNA polymerase beta' chain family. The RNAP catalytic core consists of 2 alpha, 1 beta, 1 beta' and 1 omega subunit. When a sigma factor is associated with the core the holoenzyme is formed, which can initiate transcription. Requires Mg(2+) as cofactor. It depends on Zn(2+) as a cofactor.

The catalysed reaction is RNA(n) + a ribonucleoside 5'-triphosphate = RNA(n+1) + diphosphate. In terms of biological role, DNA-dependent RNA polymerase catalyzes the transcription of DNA into RNA using the four ribonucleoside triphosphates as substrates. The sequence is that of DNA-directed RNA polymerase subunit beta' from Mycolicibacterium gilvum (strain PYR-GCK) (Mycobacterium gilvum (strain PYR-GCK)).